A 475-amino-acid polypeptide reads, in one-letter code: Methylenomycin A resistance protein (475 aa).

A run of 14 helical transmembrane segments spans residues 28–48, 65–85, 93–113, 123–143, 152–172, 173–193, 212–232, 240–260, 285–305, 314–334, 346–366, 371–391, 416–436, and 439–459; these read ITAL…VNVA, WIVD…GGLA, VYLW…LAPT, VQGA…VFSF, MLGL…TVGG, LMVS…IGAI, LAVP…FALI, TAGP…LLAL, LVGF…GLYF, FQAG…NIVY, LLTA…TITA, WVVA…SPGM, QIGS…TSDW, and GAAI…LSAW.

Belongs to the major facilitator superfamily.

It is found in the cell membrane. In terms of biological role, resistance to the epoxide antibiotic methylenomycin A; probably by mediating its efflux. In Streptomyces coelicolor (strain ATCC BAA-471 / A3(2) / M145), this protein is Methylenomycin A resistance protein (mmr).